The sequence spans 889 residues: DNA mismatch repair protein MutS (889 aa).

641-648 (GPNMAGKS) contacts ATP.

The protein belongs to the DNA mismatch repair MutS family.

This protein is involved in the repair of mismatches in DNA. It is possible that it carries out the mismatch recognition step. This protein has a weak ATPase activity. This Orientia tsutsugamushi (strain Boryong) (Rickettsia tsutsugamushi) protein is DNA mismatch repair protein MutS.